A 361-amino-acid polypeptide reads, in one-letter code: Serine/threonine-protein kinase SRK2I (361 aa).

One can recognise a Protein kinase domain in the interval 22–278; sequence YDFVKDIGSG…IPEIKTHSWF (257 aa). ATP contacts are provided by residues 28–36 and K51; that span reads IGSGNFGVA. The active-site Proton acceptor is the D141.

The protein belongs to the protein kinase superfamily. Ser/Thr protein kinase family. In terms of assembly, interacts with ABI1. Interacts with I-2 and TOPP1. Interacts with FREE1 (via C-terminus). Autophosphorylated in vitro. As to expression, expressed at low levels in seeds, seedlings, roots (especially in tips), stems, leaves, shoots, flowers and siliques.

The catalysed reaction is L-seryl-[protein] + ATP = O-phospho-L-seryl-[protein] + ADP + H(+). The enzyme catalyses L-threonyl-[protein] + ATP = O-phospho-L-threonyl-[protein] + ADP + H(+). With respect to regulation, activated by autophosphorylation of its activation loop. Together with SRK2D, key component and activator of the abscisic acid (ABA) signaling pathway that regulates numerous ABA responses, such as seed germination, Pro accumulation, root growth inhibition, dormancy and seedling growth, and, to a lesser extent, stomatal closure. In response to ABA, phosphorylates the ESCRT-I complex component FREE1, which is required for ABA-induced FREE1 nuclear import. The sequence is that of Serine/threonine-protein kinase SRK2I (SRK2I) from Arabidopsis thaliana (Mouse-ear cress).